A 205-amino-acid polypeptide reads, in one-letter code: uncharacterized protein (205 aa).

The region spanning 11–71 (KTRRALVDAA…EMVDEAGLML (61 aa)) is the HTH tetR-type domain.

This is an uncharacterized protein from Haemophilus influenzae (strain ATCC 51907 / DSM 11121 / KW20 / Rd).